A 303-amino-acid polypeptide reads, in one-letter code: DCN1-like protein 3 (303 aa).

2 disordered regions span residues 1-41 and 62-83; these read MGQC…HLSI and EASQPLAAGGDTKKKEQGTGAE. Residue Gly-2 is the site of N-myristoyl glycine attachment. One can recognise a DCUN1 domain in the interval 85–277; the sequence is SSVQRIEELF…LFDTFVEWEM (193 aa). The interval 284–303 is disordered; the sequence is EETKCIPCSGTDDQSTEGQT. A compositionally biased stretch (polar residues) spans 294–303; the sequence is TDDQSTEGQT.

As to quaternary structure, may interact (via the DCUN1 domain) with unneddylated cullins.

It localises to the cell membrane. It is found in the cytoplasm. The protein resides in the nucleus. The protein localises to the perinuclear region. Functionally, contributes to the neddylation of all cullins by transferring NEDD8 from N-terminally acetylated NEDD8-conjugating E2s enzyme to different cullin C-terminal domain-RBX complexes. At the cell membrane, can promote and as well inhibit cullins neddylation. This Xenopus tropicalis (Western clawed frog) protein is DCN1-like protein 3.